The primary structure comprises 812 residues: Chromosome alignment-maintaining phosphoprotein 1 (812 aa).

Methionine 1 carries the post-translational modification N-acetylmethionine. A compositionally biased stretch (basic and acidic residues) spans 86–105 (ASPDKWNDKPKNQLNKETDP). Disordered stretches follow at residues 86 to 124 (ASPD…SAEP) and 136 to 546 (KLGS…PEAR). Phosphoserine is present on residues serine 87, serine 108, serine 173, serine 184, serine 204, serine 214, and serine 217. Pro residues predominate over residues 202-213 (VPSPEPQKPAPV). A compositionally biased stretch (polar residues) spans 220-233 (ATLSNPKPQKQSHF). Serine 244, serine 247, serine 253, serine 264, serine 275, serine 282, serine 286, serine 297, serine 308, serine 319, serine 344, serine 355, serine 376, serine 382, and serine 386 each carry phosphoserine. The mediates interaction with MAD2L2 stretch occupies residues 271-490 (ARTTSPEPRK…KSSFFIEPQK (220 aa)). Positions 284-297 (SESPEPWKPFPAVS) are enriched in pro residues. The span at 336–361 (PAKPAPSVSPGPWKPIPSVSPGPWKP) shows a compositional bias: pro residues. Residues 363–392 (PSVSSASWKSSSVSPSSWKSPPASPESWKS) show a composition bias toward low complexity. At threonine 403 the chain carries Phosphothreonine. Phosphoserine is present on residues serine 405, serine 416, serine 427, serine 432, serine 436, serine 443, serine 445, and serine 452. A mediates localization to the spindle and the kinetochore and is required for the attachment of spindle microtubules to the kinetochore region spans residues 451–590 (LSPDQRKTSP…ELQIDAIDDQ (140 aa)). Residue threonine 458 is modified to Phosphothreonine. Residues serine 459, serine 462, serine 472, and serine 476 each carry the phosphoserine modification. Lysine 490 is modified (N6-acetyllysine; alternate). A Glycyl lysine isopeptide (Lys-Gly) (interchain with G-Cter in SUMO2); alternate cross-link involves residue lysine 490. The span at 499–512 (PGPSGPSESPKAAS) shows a compositional bias: low complexity. Residues serine 507, serine 512, and serine 542 each carry the phosphoserine modification. Lysine 565 is covalently cross-linked (Glycyl lysine isopeptide (Lys-Gly) (interchain with G-Cter in SUMO2)). Phosphoserine occurs at positions 572 and 603. The interval 591 to 812 (KCDILVQEEL…LEPPLEEQQI (222 aa)) is mediates localization to the chromosome and the spindle and negatively regulates chromosome alignment. Lysine 606 participates in a covalent cross-link: Glycyl lysine isopeptide (Lys-Gly) (interchain with G-Cter in SUMO2). Phosphoserine is present on residues serine 615, serine 626, serine 627, and serine 632. Lysine 638 is covalently cross-linked (Glycyl lysine isopeptide (Lys-Gly) (interchain with G-Cter in SUMO2)). Residues serine 651, serine 652, and serine 653 each carry the phosphoserine modification. Lysine 670 participates in a covalent cross-link: Glycyl lysine isopeptide (Lys-Gly) (interchain with G-Cter in SUMO2). Phosphoserine is present on serine 675. Lysine 689 is covalently cross-linked (Glycyl lysine isopeptide (Lys-Gly) (interchain with G-Cter in SUMO2)). Serine 736 is subject to Phosphoserine. A C2H2-type zinc finger spans residues 738–760 (YKCTICGKAFLLESLLKNHVAAH).

As to quaternary structure, interacts with MAD2L2. Interacts with POGZ, CBX1, CBX3 and CBX5. Phosphorylated by CDK1. Mitotic phosphorylation is required for the attachment of spindle microtubules to the kinetochore.

It is found in the nucleus. The protein resides in the chromosome. Its subcellular location is the centromere. It localises to the kinetochore. The protein localises to the cytoplasm. It is found in the cytoskeleton. The protein resides in the spindle. Functionally, required for proper alignment of chromosomes at metaphase and their accurate segregation during mitosis. Involved in the maintenance of spindle microtubules attachment to the kinetochore during sister chromatid biorientation. May recruit CENPE and CENPF to the kinetochore. The polypeptide is Chromosome alignment-maintaining phosphoprotein 1 (CHAMP1) (Homo sapiens (Human)).